A 419-amino-acid chain; its full sequence is MSQLHRGMHKKPGMFPPKEVLEEVDAGSGSDTETEETVECTEEEEEQDETDGLGDLGMPPPKKTTKSAASPTVPAPALIPSLSHLIGLEGKQPSRKYAPAEWPQYFKQKISVARDNDTFNVLYTPPDDSEAPVYVFHHGAGSCAESFALLSVRLREMMHEERFQLAATAKIRDENKLPGMIAFDARGHGFTEVESTDYSLEAFTNDFAFIVANVVAEFGLTNNLILVGHSLGGAVVTNACHLKLIQHPVIGLAVLDVVEGTAIESLASMQQILNSRPKSFPTVEKGIEWTVQSHTIRNRESACVSVPPTLISQHDGPGMTWRTDLMLTKPYWKGWFTGLSEKFISCAPAKLLILAGTDRLDKDLMVGQMQGKYQLIVFQESGHFVQEDAPDKTALSLIDFWKRNDKVNKTVPLFGAFRA.

A compositionally biased stretch (basic residues) spans 1 to 12; it reads MSQLHRGMHKKP. Positions 1-75 are disordered; that stretch reads MSQLHRGMHK…KSAASPTVPA (75 aa). The segment covering 32-52 has biased composition (acidic residues); that stretch reads TETEETVECTEEEEEQDETDG. Catalysis depends on residues S230, D256, and H383.

Belongs to the AB hydrolase superfamily.

The enzyme catalyses [phosphatase 2A protein]-C-terminal L-leucine methyl ester + H2O = [phosphatase 2A protein]-C-terminal L-leucine + methanol + H(+). Its function is as follows. Demethylates proteins that have been reversibly carboxymethylated. Demethylates the phosphatase PP2A catalytic subunit. This chain is Protein phosphatase methylesterase 1 (PPE1), found in Yarrowia lipolytica (strain CLIB 122 / E 150) (Yeast).